The chain runs to 122 residues: Small ribosomal subunit protein uS13 (122 aa).

A disordered region spans residues 99 to 122 (RGQRTHTNARTRKGPAKAIAGKKK).

This sequence belongs to the universal ribosomal protein uS13 family. Part of the 30S ribosomal subunit. Forms a loose heterodimer with protein S19. Forms two bridges to the 50S subunit in the 70S ribosome.

Located at the top of the head of the 30S subunit, it contacts several helices of the 16S rRNA. In the 70S ribosome it contacts the 23S rRNA (bridge B1a) and protein L5 of the 50S subunit (bridge B1b), connecting the 2 subunits; these bridges are implicated in subunit movement. Contacts the tRNAs in the A and P-sites. This chain is Small ribosomal subunit protein uS13, found in Bradyrhizobium sp. (strain ORS 278).